The following is a 238-amino-acid chain: Orotidine 5'-phosphate decarboxylase (238 aa).

Residues D10, K32, 59 to 68, T122, R184, Q193, G213, and R214 contribute to the substrate site; that span reads DLKLHDIPNT. The Proton donor role is filled by K61.

It belongs to the OMP decarboxylase family. Type 1 subfamily. Homodimer.

It catalyses the reaction orotidine 5'-phosphate + H(+) = UMP + CO2. The protein operates within pyrimidine metabolism; UMP biosynthesis via de novo pathway; UMP from orotate: step 2/2. In terms of biological role, catalyzes the decarboxylation of orotidine 5'-monophosphate (OMP) to uridine 5'-monophosphate (UMP). This chain is Orotidine 5'-phosphate decarboxylase, found in Bacillus cereus (strain ATCC 10987 / NRS 248).